Consider the following 166-residue polypeptide: Small ribosomal subunit protein uS5 (166 aa).

One can recognise an S5 DRBM domain in the interval 11–74 (LQEKLIAVNR…EKARRNMINV (64 aa)).

The protein belongs to the universal ribosomal protein uS5 family. Part of the 30S ribosomal subunit. Contacts proteins S4 and S8.

Functionally, with S4 and S12 plays an important role in translational accuracy. Its function is as follows. Located at the back of the 30S subunit body where it stabilizes the conformation of the head with respect to the body. This is Small ribosomal subunit protein uS5 from Enterobacter sp. (strain 638).